Reading from the N-terminus, the 204-residue chain is Ribonuclease HII (204 aa).

One can recognise an RNase H type-2 domain in the interval 14 to 203; that stretch reads VGLCGVDEAG…VRLLLDQTSL (190 aa). D20, E21, and D112 together coordinate a divalent metal cation.

It belongs to the RNase HII family. Mn(2+) is required as a cofactor. It depends on Mg(2+) as a cofactor.

The protein resides in the cytoplasm. The enzyme catalyses Endonucleolytic cleavage to 5'-phosphomonoester.. Endonuclease that specifically degrades the RNA of RNA-DNA hybrids. In Thiobacillus denitrificans (strain ATCC 25259 / T1), this protein is Ribonuclease HII.